The following is a 289-amino-acid chain: 4-hydroxy-tetrahydrodipicolinate synthase (289 aa).

Pyruvate is bound at residue threonine 45. Tyrosine 133 acts as the Proton donor/acceptor in catalysis. Lysine 161 serves as the catalytic Schiff-base intermediate with substrate. Isoleucine 200 contacts pyruvate.

This sequence belongs to the DapA family. Homotetramer; dimer of dimers.

The protein localises to the cytoplasm. It catalyses the reaction L-aspartate 4-semialdehyde + pyruvate = (2S,4S)-4-hydroxy-2,3,4,5-tetrahydrodipicolinate + H2O + H(+). It functions in the pathway amino-acid biosynthesis; L-lysine biosynthesis via DAP pathway; (S)-tetrahydrodipicolinate from L-aspartate: step 3/4. Its function is as follows. Catalyzes the condensation of (S)-aspartate-beta-semialdehyde [(S)-ASA] and pyruvate to 4-hydroxy-tetrahydrodipicolinate (HTPA). This chain is 4-hydroxy-tetrahydrodipicolinate synthase, found in Coxiella burnetii (strain Dugway 5J108-111).